A 100-amino-acid polypeptide reads, in one-letter code: Large ribosomal subunit protein uL23 (100 aa).

It belongs to the universal ribosomal protein uL23 family. As to quaternary structure, part of the 50S ribosomal subunit. Contacts protein L29, and trigger factor when it is bound to the ribosome.

In terms of biological role, one of the early assembly proteins it binds 23S rRNA. One of the proteins that surrounds the polypeptide exit tunnel on the outside of the ribosome. Forms the main docking site for trigger factor binding to the ribosome. In Kosmotoga olearia (strain ATCC BAA-1733 / DSM 21960 / TBF 19.5.1), this protein is Large ribosomal subunit protein uL23.